The primary structure comprises 111 residues: Large ribosomal subunit protein uL23 (111 aa).

It belongs to the universal ribosomal protein uL23 family. Part of the 50S ribosomal subunit. Contacts protein L29, and trigger factor when it is bound to the ribosome.

In terms of biological role, one of the early assembly proteins it binds 23S rRNA. One of the proteins that surrounds the polypeptide exit tunnel on the outside of the ribosome. Forms the main docking site for trigger factor binding to the ribosome. The chain is Large ribosomal subunit protein uL23 from Chlamydia caviae (strain ATCC VR-813 / DSM 19441 / 03DC25 / GPIC) (Chlamydophila caviae).